The chain runs to 177 residues: Centromere protein R (177 aa).

Lys8 participates in a covalent cross-link: Glycyl lysine isopeptide (Lys-Gly) (interchain with G-Cter in SUMO2). The LXXLL motif motif lies at Leu9–Leu13. Position 17 is a phosphoserine (Ser17). Residues Pro20–Ser50 form a DD1 region. Lys22 participates in a covalent cross-link: Glycyl lysine isopeptide (Lys-Gly) (interchain with G-Cter in SUMO2). The residue at position 28 (Ser28) is a Phosphoserine. Polar residues predominate over residues Met41 to Ser50. Positions Met41–Lys81 are disordered. A Nuclear localization signal motif is present at residues Lys63 to Lys66. At Ser71 the chain carries Phosphoserine. Positions Asn83–Leu113 form a coiled coil. The short motif at Leu172 to Leu176 is the LXXIL motif element.

In terms of assembly, homodimer; mediated by the coiled coil domain. Isoform 3, but not other isoforms, interacts with the cytoplasmic tail of integrin ITGB3. The relevance of the interaction with ITGB3 is however uncertain, since isoform 3 is mainly nuclear. Interacts with CCNA2 and MTA1. Interacts with NFKB1 NF-kappa-B subunit. Component of the CENPA-CAD complex, composed of CENPI, CENPK, CENPL, CENPO, CENPP, CENPQ, CENPR and CENPS. The CENPA-CAD complex interacts with the CENPA-NAC complex, at least composed of CENPA, CENPC, CENPH, CENPM, CENPN, CENPT and CENPU. Interacts with TASOR. Widely expressed. Expressed in spleen, thymus, prostate, ovary, small intestine and white blood cells. Highly expressed in testis and colon. Isoform 4 is expressed in platelets, lymphocytes and granulocytes.

Its subcellular location is the nucleus. The protein resides in the chromosome. The protein localises to the centromere. It is found in the kinetochore. It localises to the cytoplasm. Transcription coregulator that can have both coactivator and corepressor functions. Isoform 1, but not other isoforms, is involved in the coactivation of nuclear receptors for retinoid X (RXRs) and thyroid hormone (TRs) in a ligand-dependent fashion. In contrast, it does not coactivate nuclear receptors for retinoic acid, vitamin D, progesterone receptor, nor glucocorticoid. Acts as a coactivator for estrogen receptor alpha. Acts as a transcriptional corepressor via its interaction with the NFKB1 NF-kappa-B subunit, possibly by interfering with the transactivation domain of NFKB1. Induces apoptosis in breast cancer cells, but not in other cancer cells, via a caspase-2 mediated pathway that involves mitochondrial membrane permeabilization but does not require other caspases. May also act as an inhibitor of cyclin A-associated kinase. Also acts a component of the CENPA-CAD (nucleosome distal) complex, a complex recruited to centromeres which is involved in assembly of kinetochore proteins, mitotic progression and chromosome segregation. May be involved in incorporation of newly synthesized CENPA into centromeres via its interaction with the CENPA-NAC complex. The chain is Centromere protein R (ITGB3BP) from Homo sapiens (Human).